The following is a 308-amino-acid chain: Serine/threonine-protein phosphatase 4 catalytic subunit (308 aa).

4 residues coordinate Mn(2+): Asp-51, His-53, Asp-79, and Asn-111. The Proton donor role is filled by His-112. Residues His-161 and His-235 each coordinate Mn(2+). The residue at position 308 (Leu-308) is a Leucine methyl ester.

This sequence belongs to the PPP phosphatase family. PP-4 (PP-X) subfamily. As to quaternary structure, catalytic subunit of the histone H2A phosphatase complex (HTP-C) containing PPH3, PSY2 and PSY4. Mn(2+) is required as a cofactor.

The protein resides in the cytoplasm. Its subcellular location is the nucleus. It carries out the reaction O-phospho-L-seryl-[protein] + H2O = L-seryl-[protein] + phosphate. The catalysed reaction is O-phospho-L-threonyl-[protein] + H2O = L-threonyl-[protein] + phosphate. Functionally, forms the histone H2A phosphatase complex in association with the regulatory subunits PSY2 and PSY4, which dephosphorylates H2AS128ph (gamma-H2A) that has been displaced from sites of DNA lesions in the double-stranded DNA break repair process. Dephosphorylation is necessary for efficient recovery from the DNA damage checkpoint. This Kluyveromyces lactis (strain ATCC 8585 / CBS 2359 / DSM 70799 / NBRC 1267 / NRRL Y-1140 / WM37) (Yeast) protein is Serine/threonine-protein phosphatase 4 catalytic subunit (PPH3).